The chain runs to 305 residues: MSCLGRILSVSYPPDPYGSRLSVSKLSSPGRNRRLRWRFTALDSDSSSLDSDSSDKFAAGFCIIEGPETVQDFAKMQLQEIQDNIRSRRNKIFLHMEEVRRLRIQQRIRNTELGIIDEEQEHELPNFPSFIPFLPPLTAANLRVYYATCFSLIAGIILFGGLLAPTLELKLGIGGTSYKDFIQSLHLPMQLSQVDPIVASFSGGAVGVISALMVVEVNNVKQQEHKRCKYCLGTGYLACARCSSTGSLIISEPVSAIAGGNHSVSTSKTERCSNCSGAGKVMCPTCLCTGMAMASEHDPRIDPFL.

A chloroplast-targeting transit peptide spans 1–54 (MSCLGRILSVSYPPDPYGSRLSVSKLSSPGRNRRLRWRFTALDSDSSSLDSDSS). The next 2 membrane-spanning stretches (helical) occupy residues 144–164 (VYYA…GLLA) and 197–217 (IVAS…VVEV). A CR-type-like region spans residues 206–297 (VGVISALMVV…CTGMAMASEH (92 aa)). Residues 228-235 (CKYCLGTG) form a CXXCXGXG motif repeat. One copy of the CXXCXXXG motif repeat lies at 239–246 (CARCSSTG). Residues 272-279 (CSNCSGAG) form a CXXCXGXG motif repeat. Residues 283–290 (CPTCLCTG) form a CXXCXXXG motif repeat.

This sequence belongs to the orange-like family. As to quaternary structure, interacts with ERF1-2. Expressed in young leaves, curds and flower buds.

The protein localises to the plastid. It is found in the chloroplast membrane. Its subcellular location is the nucleus. Its function is as follows. Involved in chromoplast differentiation. Is associated with a cellular process that triggers the differentiation of pro-plastids or other non-colored plastids into chromoplasts for carotenoid accumulation. Associated with carotenoid accumulation in de-etiolated cotyledons. Controls leaf petiole elongation by suppressing the expression of ERF1 genes. This is Protein ORANGE, chloroplastic from Brassica oleracea var. botrytis (Cauliflower).